Reading from the N-terminus, the 2220-residue chain is Non-reducing polyketide synthase stbA (2220 aa).

Positions 10–255 are N-terminal acylcarrier protein transacylase domain (SAT); sequence IFSPQNSPPK…HDATNTDMAQ (246 aa). The Ketosynthase family 3 (KS3) domain maps to 379–803; that stretch reads SDAIAVVGAG…GSNSALICSE (425 aa). Catalysis depends on for beta-ketoacyl synthase activity residues Cys551, His687, and His726. The segment at 906-1207 is malonyl-CoA:ACP transacylase (MAT) domain; the sequence is LAFSGQSRTN…ADATQHTFQA (302 aa). Residue Ser993 is the For acyl/malonyl transferase activity of the active site. Residues 1287 to 1414 are N-terminal hotdog fold; that stretch reads EPRAAQLVRY…GDFTMTAGPH (128 aa). Positions 1287–1589 constitute a PKS/mFAS DH domain; it reads EPRAAQLVRY…FHKTSMTKLL (303 aa). Residues 1292–1588 form a product template (PT) domain region; the sequence is QLVRYKGALG…HFHKTSMTKL (297 aa). His1323 serves as the catalytic Proton acceptor; for dehydratase activity. A C-terminal hotdog fold region spans residues 1436–1589; sequence DAEKLRKRTA…FHKTSMTKLL (154 aa). The active-site Proton donor; for dehydratase activity is Asp1500. Carrier domains are found at residues 1634–1711 and 1742–1821; these read AAGP…SGGA and PAGP…AADV. 2 positions are modified to O-(pantetheine 4'-phosphoryl)serine: Ser1671 and Ser1779. The segment at 1879-2210 is thioesterase (TE) domain; that stretch reads TRFRMETVVY…YDFIFTELEN (332 aa). Residues Ser1999 and Asp2148 each act as for thioesterase activity in the active site.

It catalyses the reaction 3 malonyl-CoA + acetyl-CoA + 2 H(+) = orsellinate + 3 CO2 + 4 CoA. The protein operates within secondary metabolite biosynthesis; terpenoid biosynthesis. In terms of biological role, non-reducing polyketide synthase; part of the cluster that mediates the biosynthesis of LL-Z1272-beta, also known as ilicicolin B, a prenylated aryl-aldehyde produced by several fungi and that serves as a key pathway intermediate for many fungal meroterpenoids. The first step in the pathway is performed by the non-reducing polyketide synthase stbA that produces orsellinic acid by condensing acetyl-CoA with 3 malonyl-CoA units. The prenyltransferase stbC then prenylates orsenilic acid into grifolic acid. Finally, grifolic acid is reduced to ilicicolin B by the NRPS-like protein stbB. The chain is Non-reducing polyketide synthase stbA from Stachybotrys bisbyi (Hyalostachybotrys bisbyi).